Here is a 308-residue protein sequence, read N- to C-terminus: MADEEDELLETELSYDQKKEIAKWFFLNAPAGEINYVAKDLKAVLSDEEVYNEAAMEAFPVYNKTHMICLEMPSGAGDVIVSSYSEINENEYLDPRTAQVAIVDHVKQICTKVRPANDEELPSLYIEEYRYALDAEIQRYVSESYPKGMSAVNCVKGKDNEGPGSDFELVVIITAMRLSPQNFCNGSWRSVWNIDFQDESQVLDIKGKLQVGAHYFEEGNVELDAKKDFQDSTIFQSADDCAIAIANIIRHHETEYLASLEVAYSKLPDNTFKDLRRKLPVTRTLFPWQNTLQFSLTREVEKELGLGK.

Belongs to the F-actin-capping protein alpha subunit family. In terms of assembly, component of the F-actin capping complex, composed of a heterodimer of an alpha and a beta subunit.

F-actin-capping proteins bind in a Ca(2+)-independent manner to the fast growing ends of actin filaments (barbed end) thereby blocking the exchange of subunits at these ends. Unlike other capping proteins (such as gelsolin and severin), these proteins do not sever actin filaments. The sequence is that of F-actin-capping protein subunit alpha from Arabidopsis thaliana (Mouse-ear cress).